We begin with the raw amino-acid sequence, 165 residues long: Large ribosomal subunit protein uL10 (165 aa).

Belongs to the universal ribosomal protein uL10 family. As to quaternary structure, part of the ribosomal stalk of the 50S ribosomal subunit. The N-terminus interacts with L11 and the large rRNA to form the base of the stalk. The C-terminus forms an elongated spine to which L12 dimers bind in a sequential fashion forming a multimeric L10(L12)X complex.

In terms of biological role, forms part of the ribosomal stalk, playing a central role in the interaction of the ribosome with GTP-bound translation factors. The sequence is that of Large ribosomal subunit protein uL10 from Buchnera aphidicola subsp. Acyrthosiphon pisum (strain 5A).